We begin with the raw amino-acid sequence, 350 residues long: Erythronate-4-phosphate dehydrogenase (350 aa).

Residues serine 45 and threonine 66 each contribute to the substrate site. NAD(+) contacts are provided by residues glutamine 124–valine 125, aspartate 144, alanine 203–arginine 205, and aspartate 226. Arginine 205 is an active-site residue. The active site involves glutamate 231. The Proton donor role is filled by histidine 248. Residue glycine 251 participates in NAD(+) binding.

This sequence belongs to the D-isomer specific 2-hydroxyacid dehydrogenase family. PdxB subfamily. As to quaternary structure, homodimer.

The protein resides in the cytoplasm. The enzyme catalyses 4-phospho-D-erythronate + NAD(+) = (R)-3-hydroxy-2-oxo-4-phosphooxybutanoate + NADH + H(+). The protein operates within cofactor biosynthesis; pyridoxine 5'-phosphate biosynthesis; pyridoxine 5'-phosphate from D-erythrose 4-phosphate: step 2/5. In terms of biological role, catalyzes the oxidation of erythronate-4-phosphate to 3-hydroxy-2-oxo-4-phosphonooxybutanoate. The sequence is that of Erythronate-4-phosphate dehydrogenase from Legionella pneumophila (strain Lens).